Here is a 102-residue protein sequence, read N- to C-terminus: Biotrophy-associated secreted protein 4 (102 aa).

The first 21 residues, 1-21 (MQLSFSAIAILLAFAVNHATA), serve as a signal peptide directing secretion. N36 carries an N-linked (GlcNAc...) asparagine glycan.

It is found in the secreted. Its function is as follows. Secreted effector involved in biotrophic colonization of plant cells. Participates in transition from the biotrophic to the necrotrophic phase of Magnaporthe oryzae. Elicits rice basic defense responses during the early stage of interaction and promotes cell death in the late stage of compatible interaction. This chain is Biotrophy-associated secreted protein 4, found in Pyricularia oryzae (strain 70-15 / ATCC MYA-4617 / FGSC 8958) (Rice blast fungus).